The chain runs to 254 residues: Segregation and condensation protein A (254 aa).

It belongs to the ScpA family. Component of a cohesin-like complex composed of ScpA, ScpB and the Smc homodimer, in which ScpA and ScpB bind to the head domain of Smc. The presence of the three proteins is required for the association of the complex with DNA.

It is found in the cytoplasm. Its function is as follows. Participates in chromosomal partition during cell division. May act via the formation of a condensin-like complex containing Smc and ScpB that pull DNA away from mid-cell into both cell halves. In Brevibacillus brevis (strain 47 / JCM 6285 / NBRC 100599), this protein is Segregation and condensation protein A.